Consider the following 254-residue polypeptide: MTTVAGGVRASARVLARGDGRGGTVLPVLEGEGPLAVRRTRGSGAEARVMLVGAMSGPLGGDHFEVGAHAANGARLRVGSAAATLALPGQDKAGARYDVRLTVDDDAELYWLPEQLISAGGSDLTVTTSVDLAAGARLLLREEQVLGRAGEEPGRLTSRLTLRIDGRGVLDQELLCGPGAPGGWDGPAGLAGHRAVGQLVVVRPGFATEPPAARVFEEGAAVMPLAGPAALVTAVAPDALRLRRLLDGALASLD.

Belongs to the UreD family. In terms of assembly, ureD, UreF and UreG form a complex that acts as a GTP-hydrolysis-dependent molecular chaperone, activating the urease apoprotein by helping to assemble the nickel containing metallocenter of UreC. The UreE protein probably delivers the nickel.

It is found in the cytoplasm. Its function is as follows. Required for maturation of urease via the functional incorporation of the urease nickel metallocenter. The chain is Urease accessory protein UreD from Streptomyces coelicolor (strain ATCC BAA-471 / A3(2) / M145).